The following is a 490-amino-acid chain: Endoglucanase 13 (490 aa).

The N-terminal stretch at 1–26 is a signal peptide; that stretch reads MSQLKNGSSQCLWTSICIVLIVMSMA. Asparagine 6 is a glycosylation site (N-linked (GlcNAc...) asparagine). Aspartate 86 functions as the Nucleophile in the catalytic mechanism. Residues histidine 412, aspartate 464, and glutamate 473 contribute to the active site.

Belongs to the glycosyl hydrolase 9 (cellulase E) family.

It is found in the secreted. It catalyses the reaction Endohydrolysis of (1-&gt;4)-beta-D-glucosidic linkages in cellulose, lichenin and cereal beta-D-glucans.. The chain is Endoglucanase 13 from Arabidopsis thaliana (Mouse-ear cress).